The primary structure comprises 468 residues: Transcription factor ste11 (468 aa).

Residues 1–21 form a disordered region; the sequence is MSASLTAEQKDQKSSVKRPLN. The HMG box DNA-binding region spans 16–80; it reads VKRPLNSFML…KHMLENPEYK (65 aa). At threonine 173 the chain carries Phosphothreonine. Phosphoserine occurs at positions 209, 211, and 218. Composition is skewed to polar residues over residues 249–263 and 274–285; these read PSLE…SNCS and GTVSEQSNSDSP. Residues 249-290 are disordered; that stretch reads PSLEANLPQNSSNCSARRVPKFDSKGTVSEQSNSDSPELSAD.

Post-translationally, phosphorylation results in inactivation.

Its subcellular location is the nucleus. The protein localises to the cytoplasm. Key transcription factor for sexual development. Activates the transcription of the matp, matm, mei2, mfm, ste6 and rgs1 genes. Binds specifically to a DNA fragment carrying a 10-base motif 5'-TTCTTTGTTY-3'. In Schizosaccharomyces pombe (strain 972 / ATCC 24843) (Fission yeast), this protein is Transcription factor ste11 (ste11).